A 215-amino-acid chain; its full sequence is Wtf element wtf7 (215 aa).

Positions 1–21 are disordered; that stretch reads MSGSYAPIEDSADELSVHSGN. Transmembrane regions (helical) follow at residues 119 to 139, 149 to 169, and 189 to 209; these read LAQS…CLFF, LMGW…SFIL, and LILF…YALY.

Belongs to the WTF family.

The protein resides in the spore membrane. Functionally, may act in meiotic drive. The sequence is that of Wtf element wtf7 from Schizosaccharomyces pombe (strain 972 / ATCC 24843) (Fission yeast).